The sequence spans 256 residues: Small ribosomal subunit protein eS1A (256 aa).

Residue Ala-2 is modified to N-acetylalanine; partial.

It belongs to the eukaryotic ribosomal protein eS1 family. In terms of assembly, component of the small ribosomal subunit. Mature ribosomes consist of a small (40S) and a large (60S) subunit. The 40S subunit contains about 33 different proteins and 1 molecule of RNA (18S). The 60S subunit contains about 49 different proteins and 3 molecules of RNA (25S, 5.8S and 5S).

Its subcellular location is the cytoplasm. The protein is Small ribosomal subunit protein eS1A of Debaryomyces hansenii (strain ATCC 36239 / CBS 767 / BCRC 21394 / JCM 1990 / NBRC 0083 / IGC 2968) (Yeast).